Consider the following 70-residue polypeptide: Conotoxin TxMMSK-02 (70 aa).

The N-terminal stretch at 1–20 is a signal peptide; it reads MMSKLGALLTICLLLFSLTA. Residues 21-53 constitute a propeptide that is removed on maturation; it reads VPLDGDQHADQPAQRLQDRIPTEDHPLFDPNKR. 3 disulfide bridges follow: Cys-54/Cys-68, Cys-55/Cys-64, and Cys-60/Cys-67. Position 66 is a 4-hydroxyproline (Pro-66). Tyr-69 carries the post-translational modification Tyrosine amide.

Belongs to the conotoxin M superfamily. In terms of tissue distribution, expressed by the venom duct.

It is found in the secreted. This Conus textile (Cloth-of-gold cone) protein is Conotoxin TxMMSK-02.